A 154-amino-acid polypeptide reads, in one-letter code: Lipoprotein signal peptidase (154 aa).

3 helical membrane passes run 7–27 (VLYLVISLLVVIADQGLKNYI), 58–78 (IFSGQMILFYLISIAAIAVVV), and 88–108 (NWLFDTGLALVLGGIIGNFID). Residues aspartate 117 and aspartate 133 contribute to the active site. A helical membrane pass occupies residues 128–148 (IFNIADSAITVGIVLVFIYLI).

This sequence belongs to the peptidase A8 family.

It localises to the cell membrane. The catalysed reaction is Release of signal peptides from bacterial membrane prolipoproteins. Hydrolyzes -Xaa-Yaa-Zaa-|-(S,diacylglyceryl)Cys-, in which Xaa is hydrophobic (preferably Leu), and Yaa (Ala or Ser) and Zaa (Gly or Ala) have small, neutral side chains.. It participates in protein modification; lipoprotein biosynthesis (signal peptide cleavage). Its function is as follows. This protein specifically catalyzes the removal of signal peptides from prolipoproteins. This is Lipoprotein signal peptidase from Lactobacillus gasseri (strain ATCC 33323 / DSM 20243 / BCRC 14619 / CIP 102991 / JCM 1131 / KCTC 3163 / NCIMB 11718 / NCTC 13722 / AM63).